The primary structure comprises 445 residues: Glucose-6-phosphate isomerase 2 (445 aa).

The Proton donor role is filled by Glu285. Active-site residues include His306 and Lys420.

This sequence belongs to the GPI family. In terms of assembly, homodimer.

The protein resides in the cytoplasm. It catalyses the reaction alpha-D-glucose 6-phosphate = beta-D-fructose 6-phosphate. It functions in the pathway carbohydrate biosynthesis; gluconeogenesis. It participates in carbohydrate degradation; glycolysis; D-glyceraldehyde 3-phosphate and glycerone phosphate from D-glucose: step 2/4. Catalyzes the reversible isomerization of glucose-6-phosphate to fructose-6-phosphate. The sequence is that of Glucose-6-phosphate isomerase 2 from Geobacillus stearothermophilus (Bacillus stearothermophilus).